The chain runs to 520 residues: Glutamate--cysteine ligase (520 aa).

The protein belongs to the glutamate--cysteine ligase type 1 family. Type 1 subfamily.

It carries out the reaction L-cysteine + L-glutamate + ATP = gamma-L-glutamyl-L-cysteine + ADP + phosphate + H(+). Its pathway is sulfur metabolism; glutathione biosynthesis; glutathione from L-cysteine and L-glutamate: step 1/2. This is Glutamate--cysteine ligase from Serratia proteamaculans (strain 568).